Here is a 323-residue protein sequence, read N- to C-terminus: MAGRSELVVSFGEMLIDFVPTVAGVSLAEAPAFVKAPGGAPANVAIAVARLGGGAAFVGKLGDDEFGRMLAAILRDNGVDDGGVVFDAGARTALAFVTLRADGEREFMFYRNPSADMLLTHAELNVELIKRAAVFHYGSISLIAEPCRSAHLRAMEIAKEAGALLSYDPNLREALWPSREEARTKILSIWDQADIVKVSEVELEFLTGIDSVEDDVVMKLWRPTMKLLLVTLGDQGCKYYARDFRGAVPSYKVQQVDTTGAGDAFVGALLRRIVQDPSSLQDQKKLEEAIKFANACGAITATKKGAIPSLPTEVEVLKLMESA.

This sequence belongs to the carbohydrate kinase PfkB family. Expressed in root, endosperm and leaf tissues.

The enzyme catalyses D-fructose + ATP = D-fructose 6-phosphate + ADP + H(+). It participates in glycan biosynthesis; starch biosynthesis. Completely inhibited at 50 mM ATP, but not inhibited at high fructose concentration. In terms of biological role, fructokinase that may play an important role in maintaining the flux of carbon towards starch formation. May also be involved in a sugar-sensing pathway. This is Fructokinase-1 from Oryza sativa subsp. japonica (Rice).